The chain runs to 467 residues: MATEYALRMGDGKRIFLTKDKIIEELEAGMANASDLGEIPDLSGDEIDKLAEILMMPGKAVSVEQGMEVPVTHDIGTLRLDGDQGNSGVGIPSSRLVGCMMHERAFGADTMELGHIDYSYKPVKPVVANECQAMEVCQQNMIIPLFYGAMPNMGLYYTPDGPFENPGDLMKAFKIQEAWDSMEHAAAHLTRDTVWVMQKLFASGADGVNFDTTAAAGDADMYGTLHAIEALRKEFPDMYIEAGMAGECVLGMHGNLQYDGVTLAGLWPHQQAPLIAKAGANVFGPVCNTNTSKTSPWNLARAVNFMKAAVQASSIPCHVDMGMGVGGIPMLETPPIDAVTRASKAMVEIAGVDGIOIGVGDPLGMPISHIMASGMTGMRAAGDLVARMQFSKNMKIKEAKEYVAKKLNVETMDLADEYVMRELREELDIGVITSVPGAAKGIAAKMNIEKLLDVKINSCNLFRKQTR.

Position 356 (pyrrolysine 356) is a non-standard amino acid, pyrrolysine.

Belongs to the dimethylamine methyltransferase family.

The catalysed reaction is Co(I)-[dimethylamine-specific corrinoid protein] + dimethylamine + H(+) = methyl-Co(III)-[dimethylamine-specific corrinoid protein] + methylamine. It participates in one-carbon metabolism; methanogenesis from dimethylamine. Functionally, catalyzes the transfer of a methyl group from dimethylamine to the corrinoid cofactor of MtbC. In Methanosarcina mazei (strain ATCC BAA-159 / DSM 3647 / Goe1 / Go1 / JCM 11833 / OCM 88) (Methanosarcina frisia), this protein is Dimethylamine methyltransferase MtbB3 (mtbB3).